The sequence spans 320 residues: N-acetylneuraminate lyase (320 aa).

Aceneuramate contacts are provided by threonine 51 and threonine 52. Tyrosine 143 serves as the catalytic Proton donor. The active-site Schiff-base intermediate with substrate is the lysine 173. Residues threonine 175, glycine 199, aspartate 201, glutamate 202, and serine 218 each contribute to the aceneuramate site. Position 308 is a phosphoserine (serine 308).

This sequence belongs to the DapA family. NanA subfamily. In terms of assembly, homotetramer.

The protein localises to the cytoplasm. It catalyses the reaction aceneuramate = aldehydo-N-acetyl-D-mannosamine + pyruvate. It functions in the pathway amino-sugar metabolism; N-acetylneuraminate degradation. Functionally, catalyzes the cleavage of N-acetylneuraminic acid (sialic acid) to form pyruvate and N-acetylmannosamine via a Schiff base intermediate. It prevents sialic acids from being recycled and returning to the cell surface. Involved in the N-glycolylneuraminic acid (Neu5Gc) degradation pathway. This Mus musculus (Mouse) protein is N-acetylneuraminate lyase.